The chain runs to 119 residues: NADH-quinone oxidoreductase subunit A (119 aa).

A run of 3 helical transmembrane segments spans residues 7 to 27, 63 to 83, and 88 to 108; these read YPVL…VSIG, LVAI…PWGV, and IGWP…LGFA.

It belongs to the complex I subunit 3 family. NDH-1 is composed of 14 different subunits. Subunits NuoA, H, J, K, L, M, N constitute the membrane sector of the complex.

The protein localises to the cell inner membrane. The enzyme catalyses a quinone + NADH + 5 H(+)(in) = a quinol + NAD(+) + 4 H(+)(out). NDH-1 shuttles electrons from NADH, via FMN and iron-sulfur (Fe-S) centers, to quinones in the respiratory chain. The immediate electron acceptor for the enzyme in this species is believed to be ubiquinone. Couples the redox reaction to proton translocation (for every two electrons transferred, four hydrogen ions are translocated across the cytoplasmic membrane), and thus conserves the redox energy in a proton gradient. The sequence is that of NADH-quinone oxidoreductase subunit A from Burkholderia vietnamiensis (strain G4 / LMG 22486) (Burkholderia cepacia (strain R1808)).